The primary structure comprises 158 residues: NAD(P)H-quinone oxidoreductase subunit J, chloroplastic (158 aa).

This sequence belongs to the complex I 30 kDa subunit family. As to quaternary structure, NDH is composed of at least 16 different subunits, 5 of which are encoded in the nucleus.

It localises to the plastid. Its subcellular location is the chloroplast thylakoid membrane. It carries out the reaction a plastoquinone + NADH + (n+1) H(+)(in) = a plastoquinol + NAD(+) + n H(+)(out). The enzyme catalyses a plastoquinone + NADPH + (n+1) H(+)(in) = a plastoquinol + NADP(+) + n H(+)(out). Functionally, NDH shuttles electrons from NAD(P)H:plastoquinone, via FMN and iron-sulfur (Fe-S) centers, to quinones in the photosynthetic chain and possibly in a chloroplast respiratory chain. The immediate electron acceptor for the enzyme in this species is believed to be plastoquinone. Couples the redox reaction to proton translocation, and thus conserves the redox energy in a proton gradient. In Capsella bursa-pastoris (Shepherd's purse), this protein is NAD(P)H-quinone oxidoreductase subunit J, chloroplastic.